A 292-amino-acid chain; its full sequence is Protease HtpX (292 aa).

2 consecutive transmembrane segments (helical) span residues 5 to 25 (VVLFLLTNFAVLILAGIVMSV) and 34 to 54 (SGLLVMAAIFGFGGSFISLLL). Zn(2+) is bound at residue H140. E141 is an active-site residue. H144 provides a ligand contact to Zn(2+). 2 helical membrane passes run 155–175 (LLQGVLNTFVIVLARVVGGII) and 193–213 (IIVFVLEMVFGLFATMIAMWF). E218 serves as a coordination point for Zn(2+).

It belongs to the peptidase M48B family. Zn(2+) is required as a cofactor.

The protein resides in the cell inner membrane. The protein is Protease HtpX of Xanthomonas campestris pv. campestris (strain B100).